The primary structure comprises 967 residues: Aminopeptidase N (967 aa).

Over 2 to 8 (AKGFYIS) the chain is Cytoplasmic. A helical; Signal-anchor for type II membrane protein membrane pass occupies residues 9 to 32 (KSLGILGILLGVAAVCTIIALSVV). The interval 33–68 (YSQEKNKNANSSPVASTTPSASATTNPASATTLDQS) is cytosolic Ser/Thr-rich junction. Topologically, residues 33 to 967 (YSQEKNKNAN…VLQWFTENSK (935 aa)) are extracellular. The disordered stretch occupies residues 40-62 (NANSSPVASTTPSASATTNPASA). Residues 41-62 (ANSSPVASTTPSASATTNPASA) are compositionally biased toward low complexity. Positions 69-967 (KAWNRYRLPN…VLQWFTENSK (899 aa)) are metalloprotease. Residue N128 is glycosylated (N-linked (GlcNAc...) asparagine). The residue at position 176 (Y176) is a Sulfotyrosine. 2 N-linked (GlcNAc...) asparagine glycosylation sites follow: N234 and N265. The interval 288–295 (DYVEKQAS) is necessary and sufficient to mediate interaction with HCoV-229E. The N-linked (GlcNAc...) asparagine glycan is linked to N319. 352–356 (GAMEN) is a substrate binding site. H388 is a Zn(2+) binding site. E389 (proton acceptor) is an active-site residue. Positions 392 and 411 each coordinate Zn(2+). 2 positions are modified to sulfotyrosine: Y419 and Y424. N-linked (GlcNAc...) asparagine glycosylation is found at N527, N573, N625, N681, and N735. 2 disulfide bridges follow: C761/C768 and C798/C834. N818 carries N-linked (GlcNAc...) asparagine glycosylation. Y913 carries the post-translational modification Sulfotyrosine.

It belongs to the peptidase M1 family. Homodimer. Interacts with SLC6A19. As to quaternary structure, (Microbial infection) Interacts with the S1 domain of human coronavirus 229E/HCoV-229E spike protein. Zn(2+) serves as cofactor. Sulfated. Post-translationally, N- and O-glycosylated. In terms of processing, may undergo proteolysis and give rise to a soluble form. Expressed in epithelial cells of the kidney, intestine, and respiratory tract; granulocytes, monocytes, fibroblasts, endothelial cells, cerebral pericytes at the blood-brain barrier, synaptic membranes of cells in the CNS. Also expressed in endometrial stromal cells, but not in the endometrial glandular cells. Found in the vasculature of tissues that undergo angiogenesis and in malignant gliomas and lymph node metastases from multiple tumor types but not in blood vessels of normal tissues. A soluble form has been found in plasma. It is found to be elevated in plasma and effusions of cancer patients.

It localises to the cell membrane. The catalysed reaction is Release of an N-terminal amino acid, Xaa-|-Yaa- from a peptide, amide or arylamide. Xaa is preferably Ala, but may be most amino acids including Pro (slow action). When a terminal hydrophobic residue is followed by a prolyl residue, the two may be released as an intact Xaa-Pro dipeptide.. In terms of biological role, broad specificity aminopeptidase which plays a role in the final digestion of peptides generated from hydrolysis of proteins by gastric and pancreatic proteases. Also involved in the processing of various peptides including peptide hormones, such as angiotensin III and IV, neuropeptides, and chemokines. May also be involved the cleavage of peptides bound to major histocompatibility complex class II molecules of antigen presenting cells. May have a role in angiogenesis and promote cholesterol crystallization. May have a role in amino acid transport by acting as binding partner of amino acid transporter SLC6A19 and regulating its activity. (Microbial infection) Acts as a receptor for human coronavirus 229E/HCoV-229E. In case of human coronavirus 229E (HCoV-229E) infection, serves as receptor for HCoV-229E spike glycoprotein. Functionally, (Microbial infection) Mediates as well Human cytomegalovirus (HCMV) infection. This chain is Aminopeptidase N (ANPEP), found in Homo sapiens (Human).